We begin with the raw amino-acid sequence, 386 residues long: MVVFSKVAAAAFGLSAVASAMPAAPPRQGFTINQLTRAIPKRTINLPAIYANALSKYGGNVPPHIQDAMAHGSAVTTPEQYDVEYLTPVAVGGTTMNLDFDTGSADLWVFSNELPSSQTTGHSVYKPSDNGTRMSGYSWEISYGDGSSAGGDVYRDTVTVGGVTAPGQAVEAASHISEQFTRDQNNDGLLGLAFSSINTVQPKSQTTFFDSVKSQLESPLFAVTLKHQAPGSYDFGYIDQSKYTGELTYTDVDNSQGFWMFSATAGETDFDAIADTGTTLIMIDQSIAEDYYSQVPLAFNNFFYGGWTFPCSAELPSFTVTINGYDAVVPGEHIKYAPVTDGSSTCFGGIQDNQGLPFSILGDVFLKSQYVVFDSEGPQLGFAPQA.

Positions 1 to 20 are cleaved as a signal peptide; that stretch reads MVVFSKVAAAAFGLSAVASA. Positions 21-69 are cleaved as a propeptide — activation peptide; the sequence is MPAAPPRQGFTINQLTRAIPKRTINLPAIYANALSKYGGNVPPHIQDAM. A Peptidase A1 domain is found at 85–383; sequence YLTPVAVGGT…DSEGPQLGFA (299 aa). Residue aspartate 101 is part of the active site. Residue asparagine 130 is glycosylated (N-linked (GlcNAc...) asparagine). Aspartate 275 is a catalytic residue. A disulfide bridge links cysteine 311 with cysteine 346.

It belongs to the peptidase A1 family. In terms of assembly, monomer.

It is found in the secreted. The enzyme catalyses Hydrolysis of proteins with broad specificity. Generally favors hydrophobic residues in P1 and P1', but also accepts Lys in P1, which leads to activation of trypsinogen. Does not clot milk.. Secreted aspartic endopeptidase that allows assimilation of proteinaceous substrates. The scissile peptide bond is attacked by a nucleophilic water molecule activated by two aspartic residues in the active site. Shows a broad primary substrate specificity. Favors hydrophobic residues at the P1 and P1' positions, but also accepts a lysine residue in the P1 position, leading to the activation of trypsinogen and chymotrypsinogen A. The sequence is that of Aspergillopepsin-1 from Emericella nidulans (strain FGSC A4 / ATCC 38163 / CBS 112.46 / NRRL 194 / M139) (Aspergillus nidulans).